Here is a 134-residue protein sequence, read N- to C-terminus: Small ribosomal subunit protein uS11 (134 aa).

Disordered stretches follow at residues 1-22 (MPPK…KNVA) and 114-134 (SIQD…RRRV). Residues 9 to 22 (AAKKVRRKEKKNVA) show a composition bias toward basic residues.

Belongs to the universal ribosomal protein uS11 family. Part of the 30S ribosomal subunit. Interacts with proteins S7 and S18. Binds to IF-3.

Its function is as follows. Located on the platform of the 30S subunit, it bridges several disparate RNA helices of the 16S rRNA. Forms part of the Shine-Dalgarno cleft in the 70S ribosome. In Streptomyces avermitilis (strain ATCC 31267 / DSM 46492 / JCM 5070 / NBRC 14893 / NCIMB 12804 / NRRL 8165 / MA-4680), this protein is Small ribosomal subunit protein uS11.